Consider the following 64-residue polypeptide: Translation machinery-associated protein 7 homolog (64 aa).

Positions 1 to 64 are disordered; the sequence is MSGREGGKKK…GGGIKKSGKK (64 aa). Basic and acidic residues predominate over residues 27 to 38; the sequence is MAFKQKQKEQQK. Positions 27 to 50 form a coiled coil; it reads MAFKQKQKEQQKALEAAKANASKK. The segment covering 39–50 has biased composition (low complexity); the sequence is ALEAAKANASKK. The span at 53-64 shows a compositional bias: gly residues; it reads LVGGGIKKSGKK.

The polypeptide is Translation machinery-associated protein 7 homolog (Drosophila melanogaster (Fruit fly)).